Consider the following 475-residue polypeptide: Nitrogenase vanadium-iron protein beta chain (475 aa).

4 residues coordinate [8Fe-7S] cluster: Cys31, Cys56, Cys115, and Ser153.

This sequence belongs to the NifD/NifK/NifE/NifN family. In terms of assembly, hexamer of two alpha, two beta, and two delta chains. It depends on [8Fe-7S] cluster as a cofactor.

The catalysed reaction is N2 + 8 reduced [2Fe-2S]-[ferredoxin] + 16 ATP + 16 H2O = H2 + 8 oxidized [2Fe-2S]-[ferredoxin] + 2 NH4(+) + 16 ADP + 16 phosphate + 6 H(+). Its function is as follows. This vanadium-iron protein is part of the nitrogenase complex that catalyzes the key enzymatic reactions in nitrogen fixation. This chain is Nitrogenase vanadium-iron protein beta chain (vnfK), found in Azotobacter vinelandii.